The primary structure comprises 152 residues: Endoribonuclease YbeY (152 aa).

Zn(2+)-binding residues include His113, His117, and His123.

The protein belongs to the endoribonuclease YbeY family. Zn(2+) is required as a cofactor.

It is found in the cytoplasm. Functionally, single strand-specific metallo-endoribonuclease involved in late-stage 70S ribosome quality control and in maturation of the 3' terminus of the 16S rRNA. The chain is Endoribonuclease YbeY from Paracidovorax citrulli (strain AAC00-1) (Acidovorax citrulli).